A 711-amino-acid chain; its full sequence is Ribosomal RNA large subunit methyltransferase K/L (711 aa).

In terms of domain architecture, THUMP spans 43–154 (LGYRITLWSR…RGQITIGLNF (112 aa)).

This sequence belongs to the methyltransferase superfamily. RlmKL family.

It localises to the cytoplasm. The catalysed reaction is guanosine(2445) in 23S rRNA + S-adenosyl-L-methionine = N(2)-methylguanosine(2445) in 23S rRNA + S-adenosyl-L-homocysteine + H(+). It catalyses the reaction guanosine(2069) in 23S rRNA + S-adenosyl-L-methionine = N(2)-methylguanosine(2069) in 23S rRNA + S-adenosyl-L-homocysteine + H(+). In terms of biological role, specifically methylates the guanine in position 2445 (m2G2445) and the guanine in position 2069 (m7G2069) of 23S rRNA. This chain is Ribosomal RNA large subunit methyltransferase K/L, found in Shewanella sediminis (strain HAW-EB3).